The primary structure comprises 168 residues: MQTIEQQITDLIQETLSDMGFELVLVRVKGLSSKVVEILIDRLDDQKVTIEDCTKASNTISAILDVEDLIEEAYYLEVSSSGVERPLVKFENYKRFIGREVKIKLKELLNGRSRYQGTIIEAKDDKVYLKWEDQEVIINYDLIKSANLVLTEEMFKKLLGSENKSNTR.

It belongs to the RimP family.

Its subcellular location is the cytoplasm. Functionally, required for maturation of 30S ribosomal subunits. The protein is Ribosome maturation factor RimP of Rickettsia bellii (strain OSU 85-389).